The chain runs to 505 residues: Glutamate--tRNA ligase (505 aa).

The 'HIGH' region signature appears at 11-21; that stretch reads PSPTGPLHIGG. Residues 260 to 264 carry the 'KMSKS' region motif; the sequence is KLSKR. Lys263 is a binding site for ATP.

This sequence belongs to the class-I aminoacyl-tRNA synthetase family. Glutamate--tRNA ligase type 1 subfamily. As to quaternary structure, monomer.

The protein resides in the cytoplasm. It carries out the reaction tRNA(Glu) + L-glutamate + ATP = L-glutamyl-tRNA(Glu) + AMP + diphosphate. Functionally, catalyzes the attachment of glutamate to tRNA(Glu) in a two-step reaction: glutamate is first activated by ATP to form Glu-AMP and then transferred to the acceptor end of tRNA(Glu). This chain is Glutamate--tRNA ligase, found in Christiangramia forsetii (strain DSM 17595 / CGMCC 1.15422 / KT0803) (Gramella forsetii).